The chain runs to 511 residues: Chromosomal replication initiator protein DnaA (511 aa).

Residues 1–90 (MSVELWQQCV…RRSSAPRAAP (90 aa)) form a domain I, interacts with DnaA modulators region. Positions 91-174 (NAPVSAAMAA…QVEGALKHTS (84 aa)) are domain II. A disordered region spans residues 125 to 161 (TAEPAQASDMAEASSRDSYDSMADSAPAPVAPGRTEQ). Residues 175-391 (YLNRTFTFET…GALKRVIAHS (217 aa)) are domain III, AAA+ region. ATP contacts are provided by G219, G221, K222, and T223. The segment at 392–511 (HFMGRDITIE…YKNLLRTLTT (120 aa)) is domain IV, binds dsDNA.

This sequence belongs to the DnaA family. Oligomerizes as a right-handed, spiral filament on DNA at oriC.

It localises to the cytoplasm. Its function is as follows. Plays an essential role in the initiation and regulation of chromosomal replication. ATP-DnaA binds to the origin of replication (oriC) to initiate formation of the DNA replication initiation complex once per cell cycle. Binds the DnaA box (a 9 base pair repeat at the origin) and separates the double-stranded (ds)DNA. Forms a right-handed helical filament on oriC DNA; dsDNA binds to the exterior of the filament while single-stranded (ss)DNA is stabiized in the filament's interior. The ATP-DnaA-oriC complex binds and stabilizes one strand of the AT-rich DNA unwinding element (DUE), permitting loading of DNA polymerase. After initiation quickly degrades to an ADP-DnaA complex that is not apt for DNA replication. Binds acidic phospholipids. The chain is Chromosomal replication initiator protein DnaA from Pseudomonas putida (strain W619).